We begin with the raw amino-acid sequence, 282 residues long: E3 ubiquitin-protein ligase Siah1 (282 aa).

The segment at 1-28 (MSRQTATALPTGTSKCPPSQRVPTLSGT) is disordered. The RING-type zinc finger occupies 41–76 (CPVCFDYVLPPILQCQSGHLVCSNCRPKLTCCPTCR). The segment at 90-282 (VANSVLFPCK…LGINVTISMC (193 aa)) is SBD. Residues 93–153 (SVLFPCKYAS…VMPHLLHQHK (61 aa)) form an SIAH-type zinc finger. Zn(2+) contacts are provided by Cys98, Cys105, His117, Cys121, Cys128, Cys135, His147, and His152.

It belongs to the SINA (Seven in absentia) family. Homodimer.

The enzyme catalyses S-ubiquitinyl-[E2 ubiquitin-conjugating enzyme]-L-cysteine + [acceptor protein]-L-lysine = [E2 ubiquitin-conjugating enzyme]-L-cysteine + N(6)-ubiquitinyl-[acceptor protein]-L-lysine.. The protein operates within protein modification; protein ubiquitination. In terms of biological role, E3 ubiquitin-protein ligase that mediates ubiquitination and subsequent proteasomal degradation of target proteins. E3 ubiquitin ligases accept ubiquitin from an E2 ubiquitin-conjugating enzyme in the form of a thioester and then directly transfers the ubiquitin to targeted substrates. It probably triggers the ubiquitin-mediated degradation of different substrates. In Danio rerio (Zebrafish), this protein is E3 ubiquitin-protein ligase Siah1 (siah1).